The sequence spans 261 residues: Acyl-[acyl-carrier-protein]--UDP-N-acetylglucosamine O-acyltransferase (261 aa).

It belongs to the transferase hexapeptide repeat family. LpxA subfamily. Homotrimer.

Its subcellular location is the cytoplasm. The enzyme catalyses a (3R)-hydroxyacyl-[ACP] + UDP-N-acetyl-alpha-D-glucosamine = a UDP-3-O-[(3R)-3-hydroxyacyl]-N-acetyl-alpha-D-glucosamine + holo-[ACP]. It participates in glycolipid biosynthesis; lipid IV(A) biosynthesis; lipid IV(A) from (3R)-3-hydroxytetradecanoyl-[acyl-carrier-protein] and UDP-N-acetyl-alpha-D-glucosamine: step 1/6. Functionally, involved in the biosynthesis of lipid A, a phosphorylated glycolipid that anchors the lipopolysaccharide to the outer membrane of the cell. This Paracoccus denitrificans (strain Pd 1222) protein is Acyl-[acyl-carrier-protein]--UDP-N-acetylglucosamine O-acyltransferase.